Here is a 168-residue protein sequence, read N- to C-terminus: Small ribosomal subunit protein uS5c (168 aa).

The 64-residue stretch at Trp17–Val80 folds into the S5 DRBM domain.

The protein belongs to the universal ribosomal protein uS5 family. As to quaternary structure, part of the 30S ribosomal subunit. Contacts protein S4.

Its subcellular location is the plastid. It is found in the chloroplast. In terms of biological role, with S4 and S12 plays an important role in translational accuracy. The protein is Small ribosomal subunit protein uS5c (rps5) of Rhodomonas salina (Cryptomonas salina).